The chain runs to 477 residues: Bifunctional protein HldE (477 aa).

The tract at residues 1-318 (MKVTLPEFER…ENAVRGRADT (318 aa)) is ribokinase. K179 bears the N6-acetyllysine mark. 195–198 (NLSE) is an ATP binding site. Residue D264 is part of the active site. The cytidylyltransferase stretch occupies residues 344-477 (MTNGVFDILH…IKKIQLDKKG (134 aa)).

It in the N-terminal section; belongs to the carbohydrate kinase PfkB family. In the C-terminal section; belongs to the cytidylyltransferase family. As to quaternary structure, homodimer.

It carries out the reaction D-glycero-beta-D-manno-heptose 7-phosphate + ATP = D-glycero-beta-D-manno-heptose 1,7-bisphosphate + ADP + H(+). The enzyme catalyses D-glycero-beta-D-manno-heptose 1-phosphate + ATP + H(+) = ADP-D-glycero-beta-D-manno-heptose + diphosphate. The protein operates within nucleotide-sugar biosynthesis; ADP-L-glycero-beta-D-manno-heptose biosynthesis; ADP-L-glycero-beta-D-manno-heptose from D-glycero-beta-D-manno-heptose 7-phosphate: step 1/4. It participates in nucleotide-sugar biosynthesis; ADP-L-glycero-beta-D-manno-heptose biosynthesis; ADP-L-glycero-beta-D-manno-heptose from D-glycero-beta-D-manno-heptose 7-phosphate: step 3/4. In terms of biological role, catalyzes the phosphorylation of D-glycero-D-manno-heptose 7-phosphate at the C-1 position to selectively form D-glycero-beta-D-manno-heptose-1,7-bisphosphate. Its function is as follows. Catalyzes the ADP transfer from ATP to D-glycero-beta-D-manno-heptose 1-phosphate, yielding ADP-D-glycero-beta-D-manno-heptose. The chain is Bifunctional protein HldE from Escherichia coli O81 (strain ED1a).